We begin with the raw amino-acid sequence, 352 residues long: MEDSRETSPSSNNSSEELSSTLQLSKGMSIFLDILRRADKNDDGKLSFEEFKAYFADGVLSGEELHELFHTIDTHNTNNLDTEELCEYFSQHLGEYENVLAALEDLNLSILKAMGKTKKDYQEASNLEQFVTRFLLKETLNQLQSLQNSLECAMETTEEQTRQERQGPSKPEVLSIQWPGKRSSRRVQRHNSFSPNSPQFNVSSPALLEEDNQWMTQINRLQKLIDRLEKKDLKLEPLEEEIIEENTKPHIMLVQRQMSVTEEDLEEFQLALKHYVESASAQSGCLRISIQKLSNESRYMIYEFWENSSVWNRHLQTNYSKTFQRSNVDFLETPELTSTMLVPASWWILNNN.

Position 4 is a phosphoserine (Ser-4). EF-hand domains follow at residues 26 to 61 (KGMS…GVLS) and 60 to 95 (LSGE…HLGE). Asp-39, Asn-41, Asp-43, Lys-45, and Glu-50 together coordinate Ca(2+). A coiled-coil region spans residues 135–163 (LLKETLNQLQSLQNSLECAMETTEEQTRQ). The tract at residues 155 to 202 (ETTEEQTRQERQGPSKPEVLSIQWPGKRSSRRVQRHNSFSPNSPQFNV) is disordered. Over residues 190 to 202 (HNSFSPNSPQFNV) the composition is skewed to polar residues. Ser-192 and Ser-197 each carry phosphoserine. A coiled-coil region spans residues 209–275 (EEDNQWMTQI…EEFQLALKHY (67 aa)). In terms of domain architecture, ABM spans 252-340 (MLVQRQMSVT…LETPELTSTM (89 aa)).

As to quaternary structure, interacts with STX1. May interact with CPNE6. In terms of tissue distribution, expressed in brain (at protein level). Expressed in the cerebral cortex only in layer 4, thalamic nuclei (the mediodorsal nucleus), hippocampus (a small band of pyramidal neurons at the boundary between CA1 and CA3), interneurons interspersed throughout the hippocampus proper, interneurons in the hilus, bodies of the neurons but also their dendritic projections (at protein level).

Its subcellular location is the cytoplasm. This chain is N-terminal EF-hand calcium-binding protein 1 (Necab1), found in Mus musculus (Mouse).